The sequence spans 223 residues: Uracil-DNA glycosylase (223 aa).

The active-site Proton acceptor is Asp61.

The protein belongs to the uracil-DNA glycosylase (UDG) superfamily. UNG family.

Its subcellular location is the cytoplasm. The enzyme catalyses Hydrolyzes single-stranded DNA or mismatched double-stranded DNA and polynucleotides, releasing free uracil.. In terms of biological role, excises uracil residues from the DNA which can arise as a result of misincorporation of dUMP residues by DNA polymerase or due to deamination of cytosine. This Haemophilus ducreyi (strain 35000HP / ATCC 700724) protein is Uracil-DNA glycosylase.